The primary structure comprises 315 residues: DNA-directed RNA polymerase subunit alpha (315 aa).

The alpha N-terminal domain (alpha-NTD) stretch occupies residues 1-228; that stretch reads MIEIEKPKVD…EHLNLFIDLT (228 aa). The segment at 245–315 is alpha C-terminal domain (alpha-CTD); that stretch reads KEKVLEMTIE…LGLGLKPSEE (71 aa).

The protein belongs to the RNA polymerase alpha chain family. As to quaternary structure, homodimer. The RNAP catalytic core consists of 2 alpha, 1 beta, 1 beta' and 1 omega subunit. When a sigma factor is associated with the core the holoenzyme is formed, which can initiate transcription.

It carries out the reaction RNA(n) + a ribonucleoside 5'-triphosphate = RNA(n+1) + diphosphate. DNA-dependent RNA polymerase catalyzes the transcription of DNA into RNA using the four ribonucleoside triphosphates as substrates. The sequence is that of DNA-directed RNA polymerase subunit alpha from Clostridioides difficile (strain 630) (Peptoclostridium difficile).